The chain runs to 308 residues: Ribonuclease Z (308 aa).

7 residues coordinate Zn(2+): H62, H64, D66, H67, H140, D211, and H269. The active-site Proton acceptor is the D66.

Belongs to the RNase Z family. Homodimer. The cofactor is Zn(2+).

The enzyme catalyses Endonucleolytic cleavage of RNA, removing extra 3' nucleotides from tRNA precursor, generating 3' termini of tRNAs. A 3'-hydroxy group is left at the tRNA terminus and a 5'-phosphoryl group is left at the trailer molecule.. In terms of biological role, zinc phosphodiesterase, which displays some tRNA 3'-processing endonuclease activity. Probably involved in tRNA maturation, by removing a 3'-trailer from precursor tRNA. The protein is Ribonuclease Z of Treponema denticola (strain ATCC 35405 / DSM 14222 / CIP 103919 / JCM 8153 / KCTC 15104).